The sequence spans 158 residues: NAD(P)H-quinone oxidoreductase subunit J, chloroplastic (158 aa).

This sequence belongs to the complex I 30 kDa subunit family. NDH is composed of at least 16 different subunits, 5 of which are encoded in the nucleus.

The protein localises to the plastid. It is found in the chloroplast thylakoid membrane. The enzyme catalyses a plastoquinone + NADH + (n+1) H(+)(in) = a plastoquinol + NAD(+) + n H(+)(out). The catalysed reaction is a plastoquinone + NADPH + (n+1) H(+)(in) = a plastoquinol + NADP(+) + n H(+)(out). In terms of biological role, NDH shuttles electrons from NAD(P)H:plastoquinone, via FMN and iron-sulfur (Fe-S) centers, to quinones in the photosynthetic chain and possibly in a chloroplast respiratory chain. The immediate electron acceptor for the enzyme in this species is believed to be plastoquinone. Couples the redox reaction to proton translocation, and thus conserves the redox energy in a proton gradient. This Fagopyrum esculentum subsp. ancestrale (Wild buckwheat) protein is NAD(P)H-quinone oxidoreductase subunit J, chloroplastic.